Reading from the N-terminus, the 544-residue chain is MAAKNIKYNEEARKKIHKGVKTLAEAVKVTLGPKGRHVVIDKSFGSPQVTKDGVTVAKEIELEDKHENMGAQMVKEVASKTADKAGDGTTTATVLAEAIYSEGLRNVTAGANPMDLKRGIDKAVKVVVDELKKISKPVQHHKEIAQVATISANNDSEIGNLIAEAMEKVGKNGSITVEEAKGFETVLDVVEGMNFNRGYLSSYFSTNPETQECVLEDALILIYDKKISGIKDFLPVLQQVAESGRPLLIIAEEIEGEALATLVVNRLRAGFRVCAVKAPGFGDRRKAMLEDIAILTGGQLVSEELGMKLENTTLAMLGKAKKVIVTKEDTTIVEGLGNKPDIQARCDNIKKQIEDSTSDYDKEKLQERLAKLSGGVAVIRVGAATEIEMKEKKDRVDDAQHATIAAVEEGILPGGGTALVRCIPTLEAFLPMLANEDEAIGTRIILKALTAPLKQIASNAGKEGAIICQQVLARSANEGYDALRDAYTDMIDAGILDPTKVTRSALESAASIAGLLLTTEALIADIPEEKSSSAPAMPSAGMDY.

Residues 30-33 (TLGP), K51, 87-91 (DGTTT), G415, 481-483 (DAL), and D497 contribute to the ATP site.

The protein belongs to the chaperonin (HSP60) family. As to quaternary structure, forms a cylinder of 14 subunits composed of two heptameric rings stacked back-to-back. Interacts with the co-chaperonin GroES.

It is found in the cytoplasm. It carries out the reaction ATP + H2O + a folded polypeptide = ADP + phosphate + an unfolded polypeptide.. Functionally, together with its co-chaperonin GroES, plays an essential role in assisting protein folding. The GroEL-GroES system forms a nano-cage that allows encapsulation of the non-native substrate proteins and provides a physical environment optimized to promote and accelerate protein folding. The chain is Chaperonin GroEL 1 from Chlamydia pneumoniae (Chlamydophila pneumoniae).